The sequence spans 375 residues: Acetylornithine aminotransferase (375 aa).

Residues 93-94 (GT) and Phe120 contribute to the pyridoxal 5'-phosphate site. Arg123 serves as a coordination point for N(2)-acetyl-L-ornithine. 205–208 (DEVQ) lines the pyridoxal 5'-phosphate pocket. At Lys234 the chain carries N6-(pyridoxal phosphate)lysine. Thr262 contributes to the N(2)-acetyl-L-ornithine binding site. Pyridoxal 5'-phosphate is bound at residue Thr263.

It belongs to the class-III pyridoxal-phosphate-dependent aminotransferase family. ArgD subfamily. As to quaternary structure, homodimer. It depends on pyridoxal 5'-phosphate as a cofactor.

The protein localises to the cytoplasm. It carries out the reaction N(2)-acetyl-L-ornithine + 2-oxoglutarate = N-acetyl-L-glutamate 5-semialdehyde + L-glutamate. Its pathway is amino-acid biosynthesis; L-arginine biosynthesis; N(2)-acetyl-L-ornithine from L-glutamate: step 4/4. The polypeptide is Acetylornithine aminotransferase (Staphylococcus epidermidis (strain ATCC 35984 / DSM 28319 / BCRC 17069 / CCUG 31568 / BM 3577 / RP62A)).